The chain runs to 25 residues: Chrysophsin-1 (25 aa).

A Histidine amide modification is found at histidine 25.

In terms of tissue distribution, gill. Localized in certain epithelial cells lining the surface of secondary lamellae and eosinophilic granule cell-like cells at the base of secondary lamellae.

The protein resides in the secreted. In terms of biological role, has antibacterial activity against Gram-positive bacteria B.subtilis ATCC 6633, L.garvieae ATCC 49156 and S.iniae F-8502, and Gram-negative bacteria E.coli WT-2, V.anguillarum ATCC 19264, V.penaeicida KHA, V.harveyi ATCC 14126, V.vulnificus ATCC 33148, A.salmonicida NCMB 1102 and P.putida ATCC 12633. Has hemolytic activity against human red blood cells. Seems to disrupt the membranes by adopting an alpha helical conformation. May play a significant role in innate host defense. This Pagrus major (Red sea bream) protein is Chrysophsin-1.